The chain runs to 366 residues: MALFGSNDVTTAHSDYEIVLEGGSSSWGKVKARAKVNAPPASPLLPADCDVKLNVKPLDPAKGFVRISAVFESIVDSTKNKLTIEADIANETKERRISVGEGMVSVGDFSHTFSFEGSVVNLFYYRSDAVRRNVPNPIYMQGRQFHDILMKVPLDNNDLIDTWEGTVKAIGSTGAFNDWIRDFWFIGPAFTALNEGGQRISRIEVNGLNTESGPKGPVGVSRWRFSHGGSGMVDSISRWAELFPSDKLNRPAQVEAGFRSDSQGIEVKVDGEFPGVSVDAGGGLRRILNHPLIPLVHHGMVGKFNNFNVDAQLKVVLPKGYKIRYAAPQYRSQNLEEYRWSGGAYARWVEHVCKGGVGQFEILYAQ.

The bacteriochlorophyll a site is built by His111, His146, His290, His297, and His298.

In terms of assembly, homotrimer. Each subunit contains 7 molecules of bacteriochlorophyll a.

Intermediary in the transfer of excitation energy from the chlorophyll to the reaction centers. The sequence is that of Bacteriochlorophyll a protein (fmoA) from Chlorobaculum tepidum (strain ATCC 49652 / DSM 12025 / NBRC 103806 / TLS) (Chlorobium tepidum).